The chain runs to 142 residues: MDDLADCREVFAYFDSKGDERISVQQVGDVLRALGQNPTEAEIHKCVGSFDREARLSFEDFVPIFQSVSKNREKHTVEEFVEGLSHFDKEGNGMINVAELRHLLTTLGERLSDEDVDQLLSGHNDSHGNVNISDFVRAVMNS.

EF-hand domains lie at 2–37 (DDLA…LGQN) and 75–110 (HTVE…LGER).

In terms of assembly, myosin is a hexamer of 2 heavy chains and 4 light chains (two regulatory light chains and two essential light chains).

The protein resides in the cytoplasm. It is found in the cytoskeleton. In terms of biological role, required for cytokinesis and embryo elongation. May regulate myosin II complex formation and/or the association of myosin with actin. May be involved in the organization of mlc-4 and nmy-2 into bundles. The protein is Myosin-2 essential light chain of Caenorhabditis elegans.